Here is a 187-residue protein sequence, read N- to C-terminus: High-affinity copper transporter ctrA2 (187 aa).

Helical transmembrane passes span 44 to 64 (YAGTCIFLVVLAIINRCLVAF) and 137 to 157 (AAIFLCITGVSYLLMLAVMTM).

It belongs to the copper transporter (Ctr) (TC 1.A.56) family. SLC31A subfamily.

The protein resides in the cell membrane. The catalysed reaction is Cu(2+)(in) = Cu(2+)(out). Its function is as follows. High-affinity copper transporter of plasma membrane that mediates copper uptake under low copper conditions. The mechanism driving the transmembrane transport of copper has still to be determined. Acts as a potential virulence factor. In Aspergillus fumigatus (strain ATCC MYA-4609 / CBS 101355 / FGSC A1100 / Af293) (Neosartorya fumigata), this protein is High-affinity copper transporter ctrA2.